The chain runs to 400 residues: Tryptophan synthase beta chain (400 aa).

An N6-(pyridoxal phosphate)lysine modification is found at lysine 91.

Belongs to the TrpB family. Tetramer of two alpha and two beta chains. It depends on pyridoxal 5'-phosphate as a cofactor.

The catalysed reaction is (1S,2R)-1-C-(indol-3-yl)glycerol 3-phosphate + L-serine = D-glyceraldehyde 3-phosphate + L-tryptophan + H2O. It participates in amino-acid biosynthesis; L-tryptophan biosynthesis; L-tryptophan from chorismate: step 5/5. Its function is as follows. The beta subunit is responsible for the synthesis of L-tryptophan from indole and L-serine. This is Tryptophan synthase beta chain from Listeria monocytogenes serotype 4b (strain CLIP80459).